Here is a 347-residue protein sequence, read N- to C-terminus: Phenylalanine--tRNA ligase alpha subunit (347 aa).

Glu265 contributes to the Mg(2+) binding site.

Belongs to the class-II aminoacyl-tRNA synthetase family. Phe-tRNA synthetase alpha subunit type 1 subfamily. As to quaternary structure, tetramer of two alpha and two beta subunits. Requires Mg(2+) as cofactor.

It is found in the cytoplasm. The enzyme catalyses tRNA(Phe) + L-phenylalanine + ATP = L-phenylalanyl-tRNA(Phe) + AMP + diphosphate + H(+). This chain is Phenylalanine--tRNA ligase alpha subunit, found in Wolbachia sp. subsp. Brugia malayi (strain TRS).